Here is a 117-residue protein sequence, read N- to C-terminus: Con-Ins T3 (117 aa).

An N-terminal signal peptide occupies residues 1 to 24 (MTTSFYFLLMALGLLLYVCQSSFG). Residues 25–29 (NQHTR) constitute a propeptide that is removed on maturation. The residue at position 34 (proline 34) is a 4-hydroxyproline; partial. Cystine bridges form between cysteine 38-cysteine 101, cysteine 50-cysteine 114, and cysteine 100-cysteine 105. A propeptide spans 53–94 (KRNDAGKKRGQASPLWQRGGSLSMLKARAKRNEAFHLQRAHR) (c peptide). Glutamate 98 is subject to 4-carboxyglutamate. Glutamate 109 carries the 4-carboxyglutamate; partial modification. The residue at position 114 (cysteine 114) is a Cysteine amide. A propeptide spanning residues 116-117 (NS) is cleaved from the precursor.

It belongs to the insulin family. In terms of assembly, heterodimer of A and B chains; disulfide-linked. Expressed by the venom gland.

It localises to the secreted. Functionally, this venom insulin facilitates prey capture by rapidly inducing hypoglycemic shock. It is one of the smallest known insulin found in nature and lacks the C-terminal segment of the B chain that, in human insulin, mediates engagement of the insulin receptor (INSR) and assembly of the hormone's hexameric storage form. Despite lacking this segment, it both binds and activates human insulin receptor (long isoform (HIR-B) OF INSR) with only a 10-fold lower potency. In vivo, intraperitoneal injection of this peptide into zebrafish lowers blood glucose with the same potency than human insulin. In addition, when applied to water, this peptide reduces overall locomotor activity of zebrafish larvae, observed as a significant decrease in the percentage of time spent swimming and movement frequency. In Conus tulipa (Fish-hunting cone snail), this protein is Con-Ins T3.